The following is a 348-amino-acid chain: Rhodopsin (348 aa).

At methionine 1 the chain carries N-acetylmethionine. The Extracellular segment spans residues 1 to 36 (MNGTEGPNFYVPFSNKTGVVRSPFEYPQYYLAEPWQ). Residues asparagine 2 and asparagine 15 are each glycosylated (N-linked (GlcNAc...) asparagine). The helical transmembrane segment at 37 to 61 (FSMLAAYMFLLIVLGFPINFLTLYV) threads the bilayer. The Cytoplasmic portion of the chain corresponds to 62 to 73 (TVQHKKLRTPLN). A helical transmembrane segment spans residues 74–96 (YILLNLAVADLFMVFGGFTTTLY). The Extracellular segment spans residues 97-110 (TSLHGYFVFGPTGC). A disulfide bridge connects residues cysteine 110 and cysteine 187. The chain crosses the membrane as a helical span at residues 111 to 133 (NLEGFFATLGGEIALWSLVVLAI). Residues 134 to 136 (ERY) carry the 'Ionic lock' involved in activated form stabilization motif. The Cytoplasmic segment spans residues 134-152 (ERYVVVCKPMSNFRFGENH). A helical membrane pass occupies residues 153–173 (AIMGVGLTWVMALACAAPPLV). Topologically, residues 174–202 (GWSRYIPEGMQCSCGIDYYTLKPEVNNES) are extracellular. Glutamate 201 provides a ligand contact to Zn(2+). Residues 203–224 (FVIYMFVVHFTIPMIVIFFCYG) traverse the membrane as a helical segment. Over 225-252 (QLVFTVKEAAAQQQESATTQKAEKEVTR) the chain is Cytoplasmic. A helical transmembrane segment spans residues 253-274 (MVIIMVIAFLICWVPYASVAFY). The Extracellular segment spans residues 275 to 286 (IFTHQGFNFGPI). Zn(2+) is bound at residue glutamine 279. The chain crosses the membrane as a helical span at residues 287-308 (FMTLPAFFAKAAAIYNPVIYIM). At lysine 296 the chain carries N6-(retinylidene)lysine. Topologically, residues 309–348 (MNKQFRTCMITTLCCGKNPLGDDEVSASASKTETSQVAPA) are cytoplasmic. Residues cysteine 322 and cysteine 323 are each lipidated (S-palmitoyl cysteine). Positions 330–348 (DDEVSASASKTETSQVAPA) are interaction with SAG. Serine 334 and serine 338 each carry phosphoserine. Phosphothreonine is present on residues threonine 340 and threonine 342. A Phosphoserine modification is found at serine 343.

Belongs to the G-protein coupled receptor 1 family. Opsin subfamily. In terms of assembly, homodimer. Interacts (phosphorylated form) with SAG. Interacts with GNAT1. Interacts with GNAT3. SAG and G-proteins compete for a common binding site. Interacts with GRK1. Interacts with PRCD; the interaction promotes PRCD stability. Forms a complex with ASAP1 and ARF4. Forms a complex with ASAP1, RAB11A, Rabin8/RAB3IP, ARF4 and RAB11FIP3; the complex regulates Golgi-to-cilia rhodopsin/RHO transport in photoreceptors. Phosphorylated on some or all of the serine and threonine residues present in the C-terminal region. In terms of processing, contains one covalently linked retinal chromophore. Upon light absorption, the covalently bound 11-cis-retinal is converted to all-trans-retinal. After hydrolysis of the Schiff base and release of the covalently bound all-trans-retinal, active rhodopsin is regenerated by binding of a fresh molecule of 11-cis-retinal.

Its subcellular location is the membrane. It localises to the cell projection. The protein localises to the cilium. The protein resides in the photoreceptor outer segment. Its function is as follows. Photoreceptor required for image-forming vision at low light intensity. Required for photoreceptor cell viability after birth. Light-induced isomerization of 11-cis to all-trans retinal triggers a conformational change that activates signaling via G-proteins. Subsequent receptor phosphorylation mediates displacement of the bound G-protein alpha subunit by the arrestin SAG and terminates signaling. In Pagophilus groenlandicus (Harp seal), this protein is Rhodopsin (RHO).